Here is a 135-residue protein sequence, read N- to C-terminus: ATP synthase epsilon chain (135 aa).

The protein belongs to the ATPase epsilon chain family. In terms of assembly, F-type ATPases have 2 components, CF(1) - the catalytic core - and CF(0) - the membrane proton channel. CF(1) has five subunits: alpha(3), beta(3), gamma(1), delta(1), epsilon(1). CF(0) has three main subunits: a, b and c.

The protein localises to the cell inner membrane. Produces ATP from ADP in the presence of a proton gradient across the membrane. This Brucella anthropi (strain ATCC 49188 / DSM 6882 / CCUG 24695 / JCM 21032 / LMG 3331 / NBRC 15819 / NCTC 12168 / Alc 37) (Ochrobactrum anthropi) protein is ATP synthase epsilon chain.